Reading from the N-terminus, the 567-residue chain is MEFFRFINALLGFPEEERKKKQSSGGTHNEHKPEQQTNAQHPSPQPIHHTPPSHSSETNNEHKPTPTPIRPAPPPPPPIIRHLKTHGSGSTTTHNEHESTPPSHYIRPMPIEHEPTPSPQPVTHNSSTNNEHESTPLPTPTPPNSGNEHKSTSAPTPPGLHRTPLPTPPIHHGIPTQIPPKREPEHHTHGSTNNEHESKRSPIPTPPGLHRIPTPTPPTHQTSPSHSSGGTHNEHESHPPTLHIPPSHHIRPMPIPPNPPIVREPTPTPQPTPIPTPPRLHRIPTPTPPRTPQPTPPPTHGSSSTNSSGSTNNEHKPTPKPIPIPPTPPPPPPHHGIPTQIPPKHESEHHDHGSSSTNSSSSTSNSSSGGTNNEHESTPSPQPMPIEHKPEQQTNAQNRITPIINLSQTKQKTTEKQTSCTIQNLEYAIQIGNLTQAKKILNNLSSNGQISQTKVNMANTVIEGLTKLKMQNQPISNVLSNLTNSFQQMYQNYIRTGKMPDNLIELANVINAITSLLPQYSASVPPNVKAEISRLTVLQQGGSTGTVPAVFFQATEEQRPVSNLIVQ.

A disordered region spans residues 7 to 393; it reads INALLGFPEE…MPIEHKPEQQ (387 aa). The span at 65 to 79 shows a compositional bias: pro residues; sequence TPTPIRPAPPPPPPI. The span at 180–200 shows a compositional bias: basic and acidic residues; that stretch reads PKREPEHHTHGSTNNEHESKR. Residues 219–231 are compositionally biased toward low complexity; it reads THQTSPSHSSGGT. 2 stretches are compositionally biased toward pro residues: residues 253-278 and 285-299; these read MPIPPNPPIVREPTPTPQPTPIPTPP and TPTPPRTPQPTPPPT. The segment covering 300–312 has biased composition (low complexity); sequence HGSSSTNSSGSTN. Pro residues predominate over residues 319-335; the sequence is PKPIPIPPTPPPPPPHH. A compositionally biased stretch (basic and acidic residues) spans 343–353; that stretch reads PKHESEHHDHG. The segment covering 354 to 372 has biased composition (low complexity); the sequence is SSSTNSSSSTSNSSSGGTN.

It localises to the virion. The protein is Structural protein ORF567 of Acidianus two-tailed virus (ATV).